The primary structure comprises 228 residues: Putative NAC domain-containing protein 61 (228 aa).

The NAC domain occupies 5–156 (LSVGFRFYPT…KSGSSRAFDR (152 aa)). Disordered stretches follow at residues 77–96 (ARGG…ATGS) and 166–197 (RNLP…QVDL). The segment covering 80–89 (GRPSRTTGSG) has biased composition (low complexity). Polar residues predominate over residues 168–193 (LPSNGVETSSRATISTSPETSHSGGN).

The protein localises to the nucleus. This is Putative NAC domain-containing protein 61 (NAC061) from Arabidopsis thaliana (Mouse-ear cress).